A 345-amino-acid polypeptide reads, in one-letter code: Probable 3'(2'),5'-bisphosphate nucleotidase 4 (345 aa).

Residue Asp46 is the Proton acceptor of the active site. Mg(2+)-binding residues include Glu71, Asp134, Val136, and Asp137. The active-site Proton acceptor is the Thr139. Adenosine 3',5'-bisphosphate-binding residues include Thr139, Ser247, Lys250, and Arg264. 3 residues coordinate AMP: Ser247, Lys250, and Arg264.

It belongs to the inositol monophosphatase superfamily. Mg(2+) is required as a cofactor.

The enzyme catalyses 3'-phosphoadenylyl sulfate + H2O = adenosine 5'-phosphosulfate + phosphate. The catalysed reaction is adenosine 3',5'-bisphosphate + H2O = AMP + phosphate. It carries out the reaction adenosine 2',5'-bisphosphate + H2O = AMP + phosphate. It catalyses the reaction 1D-myo-inositol 1,4-bisphosphate + H2O = 1D-myo-inositol 4-phosphate + phosphate. The enzyme catalyses 1D-myo-inositol 1,3,4-trisphosphate + H2O = 1D-myo-inositol 3,4-bisphosphate + phosphate. Its pathway is signal transduction; phosphatidylinositol signaling pathway. Its function is as follows. Phosphatase that converts adenosine 3'-phosphate 5'-phosphosulfate (PAPS) to adenosine 5'-phosphosulfate (APS) and 3'(2')-phosphoadenosine 5'-phosphate (PAP) to AMP. Is also able to hydrolyze inositol 1,4-bisphosphate and inositol 1,3,4-trisphosphate. The protein is Probable 3'(2'),5'-bisphosphate nucleotidase 4 (SAL4) of Arabidopsis thaliana (Mouse-ear cress).